The primary structure comprises 128 residues: Large ribosomal subunit protein eL22 (128 aa).

A Phosphothreonine modification is found at T62. S66 carries the phosphoserine modification. K69 is modified (N6-succinyllysine).

The protein belongs to the eukaryotic ribosomal protein eL22 family. As to quaternary structure, component of the large ribosomal subunit.

Its subcellular location is the cytoplasm. Its function is as follows. Component of the large ribosomal subunit. The ribosome is a large ribonucleoprotein complex responsible for the synthesis of proteins in the cell. This Rattus norvegicus (Rat) protein is Large ribosomal subunit protein eL22 (Rpl22).